Consider the following 147-residue polypeptide: UPF0260 protein CJA_2436 (147 aa).

It belongs to the UPF0260 family.

This chain is UPF0260 protein CJA_2436, found in Cellvibrio japonicus (strain Ueda107) (Pseudomonas fluorescens subsp. cellulosa).